Consider the following 356-residue polypeptide: MSADLAMGPELPTSPLALEYVNDFDLMKFEVKKEAMAAHDRANIRQCNRLQPQGSVSSTPISTPCSSVPSSPSFSPTEQKNHLEELYWMPSGAYPQQIDPQTLSLTPEDAVEALIGATAHGHPPPPHVQQQLQAGAFDGYRGAHHHHGHAQQQQQQQPQHHHHQHQYGAIPHHPDDLSGHPGAHGHHPHHHHHHHHSQDPDSPSPTSPEQLHHRHHHHHHPHGHPGQQGHHGVGGGLNVEDRFSDDQLVTMSVRELNRHLRGFTKDEVIRLKQKRRTLKNRGYAQSCRFKRVQQKHLLENEKTQLINQVEQLKQEINRLARERDAYKLKCEKLTGANGFREAGSTSDNPSSPEFFM.

Disordered regions lie at residues 49-79 (RLQP…PTEQ) and 140-240 (YRGA…LNVE). Over residues 55 to 77 (SVSSTPISTPCSSVPSSPSFSPT) the composition is skewed to low complexity. Composition is skewed to basic residues over residues 183–196 (AHGH…HHHH) and 212–223 (HHRHHHHHHPHG). The basic motif stretch occupies residues 270-295 (RLKQKRRTLKNRGYAQSCRFKRVQQK). The 64-residue stretch at 270 to 333 (RLKQKRRTLK…DAYKLKCEKL (64 aa)) folds into the bZIP domain. Positions 298-319 (LENEKTQLINQVEQLKQEINRL) are leucine-zipper.

It belongs to the bZIP family. Maf subfamily. As to quaternary structure, homodimer or heterodimer with other bHLH-Zip transcription factors. Binds DNA as a homodimer or a heterodimer.

It is found in the nucleus. May act as a transcriptional activator or repressor. Involved in neurogenesis. Involved in the development of rhombomeres (r) 5 and 6 segments from their common precursor 'proto-segment' in the hindbrain. The protein is Transcription factor MafB (mafb) of Danio rerio (Zebrafish).